The primary structure comprises 635 residues: DNA mismatch repair protein MutL (635 aa).

Residues G359 to Y399 form a disordered region. Residues A364–A377 show a composition bias toward low complexity. The span at V378–Y399 shows a compositional bias: basic and acidic residues.

This sequence belongs to the DNA mismatch repair MutL/HexB family.

This protein is involved in the repair of mismatches in DNA. It is required for dam-dependent methyl-directed DNA mismatch repair. May act as a 'molecular matchmaker', a protein that promotes the formation of a stable complex between two or more DNA-binding proteins in an ATP-dependent manner without itself being part of a final effector complex. The protein is DNA mismatch repair protein MutL of Yersinia pestis bv. Antiqua (strain Antiqua).